The sequence spans 842 residues: MNHLEGSAEVEVADEAPGGEVNESVEADLEHPEVVEGQQPSPSPPPPAGHEPEDHRGHPAPPPPPPPQEEEEEERGECLARSASTESGFHNHTDTAEGDVLAAARDGYEAERAQDADDESAYAVQYRPEAEEYTEQAEAEHVEAAQRRALPNHLHFHSLEHEEAMNAAYSGYVYTHRLFHRAEDEPYAEPYADYGGLQEHVYEEIGDAPELEARDGLRLYERERDEAAAYRQEALGARLHHYDERSDGESDSPEKEAEFAPYPRMDSYEQEEDIDQIVAEVKQSMSSQSLDKAAEDMPEAEQDLERAPTPGGGHPDSPGLPAPAGQQQRVVGTPGGSEVGQRYSKEKRDAISLAIKDIKEAIEEVKTRTIRSPYTPDEPKEPIWVMRQDISPTRDCDDQRPVDGDSPSPGSSSPLGAESSSIPLHPGDPTEASTNKESRKSLASFPTYVEVPGPCDPEDLIDGIIFAANYLGSTQLLSDKTPSKNVRMMQAQEAVSRIKTAQKLAKSRKKAPEGESQPMTEVDLFISTQRIKVLNADTQEPMMDHPLRTISYIADIGNIVVLMARRRMPRSNSQENVEASHPSQDGKRQYKMICHVFESEDAQLIAQSIGQAFSVAYQEFLRANGINPEDLSQKEYSDLLNTQDMYNDDLIHFSKSENCKDVFIEKQKGEILGVVIVESGWGSILPTVIIANMMHGGPAEKSGKLNIGDQIMSINGTSLVGLPLSTCQSIIKGLKNQSRVKLNIVRCPPVTTVLIRRPDLRYQLGFSVQNGIICSLMRGGIAERGGVRVGHRIIEINGQSVVATPHEKIVHILSNAVGEIHMKTMPAAMYRLLTAQEQPVYI.

Disordered regions lie at residues 1–121, 238–349, and 366–439; these read MNHL…DESA, RLHH…EKRD, and KTRT…KESR. Ser-82 carries the phosphoserine modification. 2 stretches are compositionally biased toward basic and acidic residues: residues 106–115 and 240–258; these read DGYEAERAQD and HHYD…KEAE. 6 positions are modified to phosphoserine: Ser-246, Ser-250, Ser-252, Ser-267, Ser-284, and Ser-289. At Thr-309 the chain carries Phosphothreonine. 2 positions are modified to phosphoserine: Ser-317 and Ser-372. Position 375 is a phosphothreonine (Thr-375). Over residues 392–403 the composition is skewed to basic and acidic residues; sequence PTRDCDDQRPVD. Residues 404-421 are compositionally biased toward low complexity; it reads GDSPSPGSSSPLGAESSS. Phosphoserine is present on residues Ser-406, Ser-408, Ser-413, and Ser-573. Positions 460 to 648 constitute a PID domain; the sequence is LIDGIIFAAN…LLNTQDMYND (189 aa). An autoinhibitory helix linker region spans residues 631–648; the sequence is LSQKEYSDLLNTQDMYND. 2 consecutive PDZ domains span residues 661 to 746 and 752 to 828; these read DVFI…NIVR and TVLI…MPAA.

Part of a multimeric complex containing STXBP1 and STX1A. Interacts with STXBP1. Component of the brain-specific heterotrimeric complex (LIN-10-LIN-2-LIN-7 complex) composed of at least APBA1, CASK, and LIN7, which associates with the motor protein KIF17 to transport vesicles along microtubules. Within the complex, interacts (via PDZ domain) with the motor protein KIF17; the interaction is direct and is required for association of KIF17 with the cargo that is to be transported. Binds to the cytoplasmic domain of amyloid protein (APP). Interacts (via PDZ 1 and 2 domains) with FSPB. Isoform 3 interacts (via its truncated PID domain) with active, GTP-bound RAB6A. Also interacts with GTP-bound RAB6B. Isoform 3 is expressed in brain.

It is found in the cytoplasm. Its subcellular location is the perinuclear region. The protein localises to the nucleus. The protein resides in the golgi apparatus. Putative function in synaptic vesicle exocytosis by binding to Munc18-1, an essential component of the synaptic vesicle exocytotic machinery. May modulate processing of the amyloid-beta precursor protein (APP) and hence formation of AAP-beta. Component of the LIN-10-LIN-2-LIN-7 complex, which associates with the motor protein KIF17 to transport vesicles containing N-methyl-D-aspartate (NMDA) receptor subunit NR2B along microtubules. The sequence is that of Amyloid-beta A4 precursor protein-binding family A member 1 from Mus musculus (Mouse).